Consider the following 89-residue polypeptide: MSLSNETKAKIVADFGRDANDSGSTEVQVALLTAQISHLQGHFSEHKKDHHSRRGLLRMVSQRRKLLDYLKRKDVSRYTGLIARLGLRR.

Belongs to the universal ribosomal protein uS15 family. Part of the 30S ribosomal subunit. Forms a bridge to the 50S subunit in the 70S ribosome, contacting the 23S rRNA.

Functionally, one of the primary rRNA binding proteins, it binds directly to 16S rRNA where it helps nucleate assembly of the platform of the 30S subunit by binding and bridging several RNA helices of the 16S rRNA. Its function is as follows. Forms an intersubunit bridge (bridge B4) with the 23S rRNA of the 50S subunit in the ribosome. The protein is Small ribosomal subunit protein uS15 of Erwinia tasmaniensis (strain DSM 17950 / CFBP 7177 / CIP 109463 / NCPPB 4357 / Et1/99).